A 1824-amino-acid polypeptide reads, in one-letter code: Treslin (1824 aa).

Disordered stretches follow at residues 542 to 572, 590 to 622, 907 to 973, 1001 to 1035, 1098 to 1117, 1189 to 1221, 1293 to 1388, 1459 to 1518, 1617 to 1650, and 1803 to 1824; these read EFYQSSTAGSSGSLRSKKRGTQCTPVRQKMK, AQKTQGDSGSAGSGKGTEKGGKKSSGDRTKPGL, SPSK…SGES, RHSSVFYSSSQPRSRNLDRVVSSSQLSHSEGKGKF, AVGCRTPQSPRTPNRTVGDN, VPENQVNVPDSPVFAKRHSPRLVTPGKNSSPEE, PFCN…DDDK, FEGK…QSSP, TPTHHPTSSQSPLASPLTPSPQSRGWPTPENLNS, and PLCQPRRRRTPSRTYSRKKLLD. The span at 546 to 555 shows a compositional bias: low complexity; the sequence is SSTAGSSGSL. A compositionally biased stretch (polar residues) spans 562–572; the sequence is TQCTPVRQKMK. A compositionally biased stretch (basic and acidic residues) spans 605–619; it reads GTEKGGKKSSGDRTK. Residues 907–921 are compositionally biased toward polar residues; sequence SPSKKSKMPRSQSVS. The span at 932-952 shows a compositional bias: basic and acidic residues; it reads SDVDNDDRHTLLTKKVSETPL. Composition is skewed to polar residues over residues 1005–1014 and 1103–1114; these read VFYSSSQPRS and TPQSPRTPNRTV. Residues 1319 to 1345 are compositionally biased toward polar residues; sequence RSGNTPVKESCSPSSNSQGITGTSPSP. Residues 1347–1370 are compositionally biased toward low complexity; sequence KSLSSAVAKSSPSPSFGPSRSGVG. Residues 1462 to 1472 show a composition bias toward polar residues; it reads KQTTSTGTPLT. Positions 1480-1490 are enriched in basic and acidic residues; the sequence is TPDRRQREAEA. Composition is skewed to polar residues over residues 1617 to 1629 and 1636 to 1650; these read TPTHHPTSSQSPL and SPQSRGWPTPENLNS. Over residues 1807-1824 the composition is skewed to basic residues; sequence PRRRRTPSRTYSRKKLLD.

The protein belongs to the treslin family. As to quaternary structure, interacts with topbp1 (via BRCT domains); interaction takes place in a cdk2-dependent manner. Component of the replisome complex.

It localises to the nucleus. In terms of biological role, regulator of DNA replication and S/M and G2/M checkpoints. Regulates the triggering of DNA replication initiation via its interaction with topbp1 by participating in cdk2-mediated loading of cdc45l onto replication origins. Required for the transition from pre-replication complex (pre-RC) to pre-initiation complex (pre-IC). Required to prevent mitotic entry after treatment with ionizing radiation. The polypeptide is Treslin (ticrr) (Danio rerio (Zebrafish)).